A 756-amino-acid chain; its full sequence is Catalase-peroxidase (756 aa).

The segment at residues 91-244 (WHSAGTYRTG…LAAVQMGLIY (154 aa)) is a cross-link (tryptophyl-tyrosyl-methioninium (Trp-Tyr) (with M-270)). H92 functions as the Proton acceptor in the catalytic mechanism. The segment at 198–230 (AQKKMQQPGDGTLVAEPENHANEESRTASGERN) is disordered. Basic and acidic residues predominate over residues 214–223 (PENHANEESR). Positions 244 to 270 (YVNPEGPEGVPDPVASARDIRETFGRM) form a cross-link, tryptophyl-tyrosyl-methioninium (Tyr-Met) (with W-91). H285 serves as a coordination point for heme b. Positions 371–390 (KNGAGAGKIPDAHDPSKRHA) are disordered.

It belongs to the peroxidase family. Peroxidase/catalase subfamily. In terms of assembly, homodimer or homotetramer. Heme b serves as cofactor. In terms of processing, formation of the three residue Trp-Tyr-Met cross-link is important for the catalase, but not the peroxidase activity of the enzyme.

The enzyme catalyses H2O2 + AH2 = A + 2 H2O. It carries out the reaction 2 H2O2 = O2 + 2 H2O. Its function is as follows. Bifunctional enzyme with both catalase and broad-spectrum peroxidase activity. The polypeptide is Catalase-peroxidase (Pseudomonas syringae pv. tomato (strain ATCC BAA-871 / DC3000)).